A 316-amino-acid polypeptide reads, in one-letter code: Olfactory receptor 4N4 (316 aa).

Topologically, residues 1 to 25 (MKIANNTVVTEFILLGLTQSQDIQL) are extracellular. The N-linked (GlcNAc...) asparagine glycan is linked to Asn-5. A helical membrane pass occupies residues 26-49 (LVFVLILIFYLIILPGNFLIIFTI). Residues 50–57 (RSDPGLTA) lie on the Cytoplasmic side of the membrane. Residues 58–79 (PLYLFLGNLAFLDASYSFIVAP) form a helical membrane-spanning segment. The Extracellular portion of the chain corresponds to 80–100 (RMLVDFLSEKKVISYRGCITQ). Cys-97 and Cys-189 are disulfide-bonded. A helical membrane pass occupies residues 101–120 (LFFLHFLGGGEGLLLVVMAF). The Cytoplasmic segment spans residues 121–139 (DRYIAICRPLHCSTVMNPR). The chain crosses the membrane as a helical span at residues 140-158 (ACYAMMLALWLGGFVHSII). Topologically, residues 159–195 (QVVLILRLPFCGPNQLDNFFCDVRQVIKLACTDMFVV) are extracellular. A helical membrane pass occupies residues 196–219 (ELLMVFNSGLMTLLCFLGLLASYA). The Cytoplasmic segment spans residues 220-235 (VILCHVRRAASEGKNK). The chain crosses the membrane as a helical span at residues 236-258 (AMSTCTTRVIIILLMFGPAIFIY). The Extracellular portion of the chain corresponds to 259 to 269 (MCPFRALPADK). The chain crosses the membrane as a helical span at residues 270–289 (MVSLFHTVIFPLMNPMIYTL). The Cytoplasmic portion of the chain corresponds to 290–316 (RNQEVKTSMKRLLSRHVVCQVDFIIRN).

The protein belongs to the G-protein coupled receptor 1 family.

The protein localises to the cell membrane. Its function is as follows. Odorant receptor. The protein is Olfactory receptor 4N4 (OR4N4) of Homo sapiens (Human).